A 445-amino-acid polypeptide reads, in one-letter code: tRNA modification GTPase MnmE (445 aa).

Residues Arg-20, Glu-79, and Lys-119 each coordinate (6S)-5-formyl-5,6,7,8-tetrahydrofolate. The region spanning Gly-215 to Glu-371 is the TrmE-type G domain. Position 225 (Asn-225) interacts with K(+). Residues Asn-225–Ser-230, Ser-244–Thr-250, and Asp-269–Gly-272 each bind GTP. Ser-229 is a Mg(2+) binding site. Positions 244, 246, and 249 each coordinate K(+). Thr-250 is a binding site for Mg(2+). Lys-445 lines the (6S)-5-formyl-5,6,7,8-tetrahydrofolate pocket.

It belongs to the TRAFAC class TrmE-Era-EngA-EngB-Septin-like GTPase superfamily. TrmE GTPase family. Homodimer. Heterotetramer of two MnmE and two MnmG subunits. The cofactor is K(+).

Its subcellular location is the cytoplasm. In terms of biological role, exhibits a very high intrinsic GTPase hydrolysis rate. Involved in the addition of a carboxymethylaminomethyl (cmnm) group at the wobble position (U34) of certain tRNAs, forming tRNA-cmnm(5)s(2)U34. This chain is tRNA modification GTPase MnmE, found in Rickettsia prowazekii (strain Madrid E).